We begin with the raw amino-acid sequence, 199 residues long: Protein-L-isoaspartate O-methyltransferase (199 aa).

Residue Ser-51 is part of the active site.

This sequence belongs to the methyltransferase superfamily. L-isoaspartyl/D-aspartyl protein methyltransferase family.

It localises to the cytoplasm. The catalysed reaction is [protein]-L-isoaspartate + S-adenosyl-L-methionine = [protein]-L-isoaspartate alpha-methyl ester + S-adenosyl-L-homocysteine. Functionally, catalyzes the methyl esterification of L-isoaspartyl residues in peptides and proteins that result from spontaneous decomposition of normal L-aspartyl and L-asparaginyl residues. It plays a role in the repair and/or degradation of damaged proteins. The protein is Protein-L-isoaspartate O-methyltransferase of Fervidobacterium nodosum (strain ATCC 35602 / DSM 5306 / Rt17-B1).